The primary structure comprises 108 residues: Alkyltransferase-like protein 1 (108 aa).

Belongs to the MGMT family. ATL subfamily.

Functionally, involved in DNA damage recognition. Binds DNA containing O(6)-methylguanine and larger O(6)-alkylguanine adducts. The DNA is bent, the damaged base is rotated out of the DNA duplex into a hydrophobic binding pocket (nucleotide flipping), with Arg-39 donating a hydrogen bond to the orphaned cytosine to stabilize the extrahelical DNA conformation. This structural change in DNA presents the lesion to the nucleotide excision repair (NER) pathway. The affinity for O(6)-alkylguanine adducts increases with the size of the alkyl group. Low affinity small O(6)-alkylguanines are directed to the global genome repair pathway of NER via rhp7-rhp16 and rhp41-rhp23, while strong binding to bulky O(6)-alkylguanines stalls the transcription machinery and diverts the damage to the transcription-coupled repair pathway of NER via rhp26. This Schizosaccharomyces pombe (strain 972 / ATCC 24843) (Fission yeast) protein is Alkyltransferase-like protein 1.